Consider the following 148-residue polypeptide: Aspartate carbamoyltransferase regulatory chain (148 aa).

4 residues coordinate Zn(2+): C106, C111, C134, and C137.

Belongs to the PyrI family. Contains catalytic and regulatory chains. It depends on Zn(2+) as a cofactor.

In terms of biological role, involved in allosteric regulation of aspartate carbamoyltransferase. The sequence is that of Aspartate carbamoyltransferase regulatory chain from Methanococcus maripaludis (strain C6 / ATCC BAA-1332).